The chain runs to 677 residues: MTQVAKKILVTCALPYANGSIHLGHMLEHIQADVWVRYQRMRGHEVNFICADDAHGTPIMLKAQQLGITPEQMIGEMRHEHQTDFAGFNISYDNYHSTHSDENRELSELIYTRLKENGFIKNRTISQLYDPEKGMFLPDRFVKGTCPKCKSADQYGDNCEVCGATYSPTELIEPKSVVSGATPVMRDSEHFFFDLPSFSEMLQAWTRSGALQEQVANKMQEWFESGLQQWDISRDAPYFGFEIPNAPGKYFYVWLDAPIGYMGSFKNLCDKRGDTTSFEEYWKKDSDAELYHFIGKDIVYFHSLFWPAMLEGSNFRKPTNLFVHGYVTVNGAKMSKSRGTFIKASTWLNHFDADSLRYYYTAKLSSRIDDIDLNLEDFVQRVNADIVNKVVNLASRNAGFINKRFDGVLAAELADPQLYKTFTDAAAAIGEAWESREFGKAIREIMALADVANRYVDEQAPWVVAKQEGRDADLQAICSMGINLFRVLMTYLKPVLPTLSERVEAFLNCELSWEGIQQPLLGHKINAFKALYNRIDMKQVEALVDASKEEVKAAAAPVTGPLADSPIQETITFDDFAKVDLRVALIENAGFVEGSDKLLRLTLDLGGEKRNVFSGIRSAYPDPRALIGRQTVMVANLAPRKMRFGVSEGMVMAAGPGGKDIFLLSPDDGAKPGQQVK.

A 'HIGH' region motif is present at residues 15 to 25; that stretch reads PYANGSIHLGH. 4 residues coordinate Zn(2+): C146, C149, C159, and C162. A 'KMSKS' region motif is present at residues 333–337; that stretch reads KMSKS. K336 lines the ATP pocket. Positions 575-677 constitute a tRNA-binding domain; that stretch reads DFAKVDLRVA…DGAKPGQQVK (103 aa).

This sequence belongs to the class-I aminoacyl-tRNA synthetase family. MetG type 1 subfamily. As to quaternary structure, homodimer. The cofactor is Zn(2+).

Its subcellular location is the cytoplasm. The enzyme catalyses tRNA(Met) + L-methionine + ATP = L-methionyl-tRNA(Met) + AMP + diphosphate. In terms of biological role, is required not only for elongation of protein synthesis but also for the initiation of all mRNA translation through initiator tRNA(fMet) aminoacylation. In Salmonella arizonae (strain ATCC BAA-731 / CDC346-86 / RSK2980), this protein is Methionine--tRNA ligase.